Here is a 417-residue protein sequence, read N- to C-terminus: Serine hydroxymethyltransferase 1 (417 aa).

(6S)-5,6,7,8-tetrahydrofolate is bound by residues L121 and 125-127 (GHL). K229 carries the post-translational modification N6-(pyridoxal phosphate)lysine. Residue 355-357 (SPF) participates in (6S)-5,6,7,8-tetrahydrofolate binding.

The protein belongs to the SHMT family. As to quaternary structure, homodimer. Requires pyridoxal 5'-phosphate as cofactor.

It localises to the cytoplasm. It catalyses the reaction (6R)-5,10-methylene-5,6,7,8-tetrahydrofolate + glycine + H2O = (6S)-5,6,7,8-tetrahydrofolate + L-serine. Its pathway is one-carbon metabolism; tetrahydrofolate interconversion. It functions in the pathway amino-acid biosynthesis; glycine biosynthesis; glycine from L-serine: step 1/1. Catalyzes the reversible interconversion of serine and glycine with tetrahydrofolate (THF) serving as the one-carbon carrier. This reaction serves as the major source of one-carbon groups required for the biosynthesis of purines, thymidylate, methionine, and other important biomolecules. Also exhibits THF-independent aldolase activity toward beta-hydroxyamino acids, producing glycine and aldehydes, via a retro-aldol mechanism. This is Serine hydroxymethyltransferase 1 from Pectobacterium atrosepticum (strain SCRI 1043 / ATCC BAA-672) (Erwinia carotovora subsp. atroseptica).